Here is a 171-residue protein sequence, read N- to C-terminus: Ribosome maturation factor RimM (171 aa).

Residues 94–168 (NDEFYKDELI…MTIVPPEIVG (75 aa)) form the PRC barrel domain.

It belongs to the RimM family. As to quaternary structure, binds ribosomal protein uS19.

It localises to the cytoplasm. In terms of biological role, an accessory protein needed during the final step in the assembly of 30S ribosomal subunit, possibly for assembly of the head region. Essential for efficient processing of 16S rRNA. May be needed both before and after RbfA during the maturation of 16S rRNA. It has affinity for free ribosomal 30S subunits but not for 70S ribosomes. The protein is Ribosome maturation factor RimM of Anaplasma phagocytophilum (strain HZ).